Reading from the N-terminus, the 187-residue chain is ATP synthase subunit b (187 aa).

Residues 36-53 (PYQWVSVAMLVLIAIMLW) form a helical membrane-spanning segment.

Belongs to the ATPase B chain family. F-type ATPases have 2 components, F(1) - the catalytic core - and F(0) - the membrane proton channel. F(1) has five subunits: alpha(3), beta(3), gamma(1), delta(1), epsilon(1). F(0) has four main subunits: a(1), b(2) and c(10-14). The alpha and beta chains form an alternating ring which encloses part of the gamma chain. F(1) is attached to F(0) by a central stalk formed by the gamma and epsilon chains, while a peripheral stalk is formed by the delta and b chains.

The protein resides in the cell inner membrane. F(1)F(0) ATP synthase produces ATP from ADP in the presence of a proton or sodium gradient. F-type ATPases consist of two structural domains, F(1) containing the extramembraneous catalytic core and F(0) containing the membrane proton channel, linked together by a central stalk and a peripheral stalk. During catalysis, ATP synthesis in the catalytic domain of F(1) is coupled via a rotary mechanism of the central stalk subunits to proton translocation. In terms of biological role, component of the F(0) channel, it forms part of the peripheral stalk, linking F(1) to F(0). The chain is ATP synthase subunit b from Erythrobacter litoralis (strain HTCC2594).